Here is a 1730-residue protein sequence, read N- to C-terminus: MAASAKVTVGSHVWVEDPDDAWIDGEVEEVNSEEITVNCSGKTVVAKLNNVYPKDPEFPELGVDDMTKLAYLHEPGVLLNLKCRYNANEIYTYTGNILIAVNPFKRLPHLYGSETMKQYKGTAFGELSPHPFAVADSAYRKMINEGVSQAILVSGESGAGKTESTKMLMQYLAYMGGRAESEGRSVEQQVLESNPVLEAFGNAKTVRNNNSSRFGKFVEIQFDQRGRISGAAIRTYLLERSRVCQVSDPERNYHCFYMLCAAPEQETERYKLGKPSTFRYLNQSNCYALDGLDDSKEYLATRKAMDVVGINSEEQDGIFRVVAAILHLGNIEFAKGEESEASEPKDEKSRFHLKVAAELFMCDGKALEDSLCKRVMVTRDESITKSLDPDSAALGRDALAKIVYSKLFDWLVTKINNSIGQDPNSKHIIGVLDIYGFESFKTNSFEQFCINLTNEKLQQHFNQHVFKMEQEEYTKEEIDWSYIEFIDNQDVLDLIEKKPGGIIALLDEACMFPRSTHDTFAQKLYQTFKNHKRFGKPKLAQTDFTICHYAGDVTYQTELFLDKNKDYVVGEHQALLSSSDCSFVSSLFPPLPEESSKTSKFSSIGSQFKQQLQSLLESLSTTEPHYIRCVKPNNLLKPDIFENINILHQLRCGGVMEAIRISCAGYPTRKPFNEFLTRFRILAPETTKSSYDEVDACKKLLAKVDLKGFQIGKTKVFLRAGQMAEMDAHRAEVLGHSARIIQRNVLTYQSRKKFLLLQAASTEIQALCRGQVARVWFETMRREAASLRIQKQARTYICQNAYKTLCSSACSIQTGMRAKAARIELQLRKKRRATIIIQSQIRRCLCHQRYVRTKKAAITTQCGWRVKVARRELRNLKMAAKETGALQDAKTKLENQVEELTSNLELEKQMRMEIEEAKSQEIEALQSVLTDIKLQLRDTQETKSKEISDLQSVLTDIKLQLRDTQETKSKEISDLQSALQDMQLEIEELSKGLEMTNDLAAENEQLKESVSSLQNKIDESERKYEEISKISEERIKDEVPVIDQSAIIKLETENQKLKALVSSMEEKIDELDRKHDETSPNITEKLKEDVSFDYEIVSNLEAENERLKALVGSLEKKINESGNNSTDEQEEGKYILKEESLTEDASIDNERVKKLADENKDLNDLVSSLEKKIDETEKKYEEASRLCEERLKQALDAETGLIDLKTSMQRLEEKVSDMETAEQIRRQQALVNSASRRMSPQVSFTGAPPLENGHQEPLAPIPSRRFGTESFRRSRIERQPHEFVDVLLKCVSKNIGFSHGKPVAALTIYKCLMRWKIFEAEKTSIFDRIVPVFGSAIENQEDDNHLAYWLTNTSTLLFLLQRSLRQQSSTGSSPTKPPQPTSFFGRMTQGFRSTSSPNLSTDVVQQVDARYPALLFKQQLTAYVETMYGIIRENVKREVSSLLSSCIQSLKESSCDSSVVNSPSKSSEENLPAKSSEENSPKKSSEENSPKESSGDKSPQKLSDDNSPSKEGQAVKSSEENSPASSWQSIIEFLNYILITWKKNYVPLFLVQKMFSQTFQYINVQLFNSLLLEREYCTVNMGIKVKAGLDELESWCSQATEEFVGSSWDELKHTRQAVVLLVTEPKSTITYDDLTINLCSVLSTEQLYRICTLCKDKDDGDHNVSPEVISNLKLLLTNEDENSRSFLLDDDSSIPFDTDEISSCMQEKDFANVKSASELADNPNFLFLKE.

Residues 8 to 56 form the Myosin N-terminal SH3-like domain; it reads TVGSHVWVEDPDDAWIDGEVEEVNSEEITVNCSGKTVVAKLNNVYPKDP. Residues 61–731 form the Myosin motor domain; sequence LGVDDMTKLA…QMAEMDAHRA (671 aa). Residues 155 to 162 and 208 to 216 each bind ATP; these read GESGAGKT and NNNSSRFGK. 4 actin-binding regions span residues 494-528, 530-553, 588-612, and 612-634; these read LIEK…YQTF, NHKR…AGDV, FPPL…KQQL, and LQSL…KPNN. IQ domains are found at residues 757–786, 782–811, 831–850, and 853–882; these read LQAA…EAAS, REAA…SACS, RRAT…HQRY, and TKKA…AAKE. Residues 883–1224 are a coiled coil; that stretch reads TGALQDAKTK…VSDMETAEQI (342 aa). In terms of domain architecture, Dilute spans 1327-1678; it reads DRIVPVFGSA…ISNLKLLLTN (352 aa). 2 disordered regions span residues 1367–1387 and 1456–1520; these read QSST…FGRM and DSSV…SSEE. Residues 1456–1465 are compositionally biased toward low complexity; sequence DSSVVNSPSK. Positions 1475–1508 are enriched in basic and acidic residues; that stretch reads SSEENSPKKSSEENSPKESSGDKSPQKLSDDNSP.

This sequence belongs to the TRAFAC class myosin-kinesin ATPase superfamily. Myosin family. Plant myosin class XI subfamily. In terms of assembly, homodimer.

In terms of biological role, myosin heavy chain that is required for the cell cycle-regulated transport of various organelles and proteins for their segregation. Functions by binding with its tail domain to receptor proteins on organelles and exerting force with its N-terminal motor domain against actin filaments, thereby transporting its cargo along polarized actin cables. The polypeptide is Myosin-7 (XI-A) (Arabidopsis thaliana (Mouse-ear cress)).